Here is a 392-residue protein sequence, read N- to C-terminus: Major outer membrane protein P.IA (392 aa).

Positions 1–19 (MRKKLTALVLSALPLAAVA) are cleaved as a signal peptide.

Belongs to the Gram-negative porin family. As to quaternary structure, homotrimer.

It localises to the cell outer membrane. Its function is as follows. Serves as a slightly cation selective porin. Major antigen on the gonococcal cell surface and it may have pathogenic properties in addition to its porin activity. In Neisseria meningitidis serogroup B (strain ATCC BAA-335 / MC58), this protein is Major outer membrane protein P.IA (porA).